The primary structure comprises 228 residues: Demethylmenaquinone methyltransferase (228 aa).

S-adenosyl-L-methionine contacts are provided by residues T62, D80, D100–A101, and S117.

The protein belongs to the class I-like SAM-binding methyltransferase superfamily. MenG/UbiE family.

It catalyses the reaction a 2-demethylmenaquinol + S-adenosyl-L-methionine = a menaquinol + S-adenosyl-L-homocysteine + H(+). Its pathway is quinol/quinone metabolism; menaquinone biosynthesis; menaquinol from 1,4-dihydroxy-2-naphthoate: step 2/2. In terms of biological role, methyltransferase required for the conversion of demethylmenaquinol (DMKH2) to menaquinol (MKH2). This chain is Demethylmenaquinone methyltransferase, found in Mycolicibacterium gilvum (strain PYR-GCK) (Mycobacterium gilvum (strain PYR-GCK)).